We begin with the raw amino-acid sequence, 378 residues long: Erythronate-4-phosphate dehydrogenase (378 aa).

2 residues coordinate substrate: S45 and T67. D147 provides a ligand contact to NAD(+). The active site involves R209. D233 contributes to the NAD(+) binding site. E238 is an active-site residue. The active-site Proton donor is H255. Residue G258 participates in NAD(+) binding. Y259 contributes to the substrate binding site.

This sequence belongs to the D-isomer specific 2-hydroxyacid dehydrogenase family. PdxB subfamily. In terms of assembly, homodimer.

The protein localises to the cytoplasm. It catalyses the reaction 4-phospho-D-erythronate + NAD(+) = (R)-3-hydroxy-2-oxo-4-phosphooxybutanoate + NADH + H(+). Its pathway is cofactor biosynthesis; pyridoxine 5'-phosphate biosynthesis; pyridoxine 5'-phosphate from D-erythrose 4-phosphate: step 2/5. In terms of biological role, catalyzes the oxidation of erythronate-4-phosphate to 3-hydroxy-2-oxo-4-phosphonooxybutanoate. This chain is Erythronate-4-phosphate dehydrogenase, found in Shewanella denitrificans (strain OS217 / ATCC BAA-1090 / DSM 15013).